A 405-amino-acid chain; its full sequence is Acetylornithine/succinyldiaminopimelate aminotransferase (405 aa).

Pyridoxal 5'-phosphate is bound by residues 108 to 109 and Phe141; that span reads GT. Arg144 is a N(2)-acetyl-L-ornithine binding site. Residue 226 to 229 coordinates pyridoxal 5'-phosphate; the sequence is DEVQ. An N6-(pyridoxal phosphate)lysine modification is found at Lys255. A N(2)-acetyl-L-ornithine-binding site is contributed by Ser283. Residue Thr284 coordinates pyridoxal 5'-phosphate.

The protein belongs to the class-III pyridoxal-phosphate-dependent aminotransferase family. ArgD subfamily. As to quaternary structure, homodimer. It depends on pyridoxal 5'-phosphate as a cofactor.

The protein resides in the cytoplasm. The catalysed reaction is N(2)-acetyl-L-ornithine + 2-oxoglutarate = N-acetyl-L-glutamate 5-semialdehyde + L-glutamate. It catalyses the reaction N-succinyl-(2S,6S)-2,6-diaminopimelate + 2-oxoglutarate = (S)-2-succinylamino-6-oxoheptanedioate + L-glutamate. Its pathway is amino-acid biosynthesis; L-arginine biosynthesis; N(2)-acetyl-L-ornithine from L-glutamate: step 4/4. The protein operates within amino-acid biosynthesis; L-lysine biosynthesis via DAP pathway; LL-2,6-diaminopimelate from (S)-tetrahydrodipicolinate (succinylase route): step 2/3. Involved in both the arginine and lysine biosynthetic pathways. The polypeptide is Acetylornithine/succinyldiaminopimelate aminotransferase (Salmonella typhi).